Reading from the N-terminus, the 124-residue chain is Large ribosomal subunit protein bL12 (124 aa).

Belongs to the bacterial ribosomal protein bL12 family. As to quaternary structure, homodimer. Part of the ribosomal stalk of the 50S ribosomal subunit. Forms a multimeric L10(L12)X complex, where L10 forms an elongated spine to which 2 to 4 L12 dimers bind in a sequential fashion. Binds GTP-bound translation factors.

Its function is as follows. Forms part of the ribosomal stalk which helps the ribosome interact with GTP-bound translation factors. Is thus essential for accurate translation. The protein is Large ribosomal subunit protein bL12 of Brucella abortus (strain S19).